We begin with the raw amino-acid sequence, 256 residues long: UstYa family oxidase phomYc (256 aa).

The chain crosses the membrane as a helical span at residues 38–58; sequence LVLVLQFVLIISLLASLHILG. N-linked (GlcNAc...) asparagine glycosylation is found at Asn-64 and Asn-132. An HXXHC 1 motif is present at residues 158 to 162; sequence HQLHC. Residue Asn-179 is glycosylated (N-linked (GlcNAc...) asparagine). The short motif at 193-197 is the HXXHC 2 element; sequence HIDHC.

Belongs to the ustYa family.

It is found in the membrane. Its pathway is mycotoxin biosynthesis. Functionally, ustYa family oxidase; part of the gene cluster that mediates the biosynthesis of the phomopsins, a group of hexapeptide mycotoxins which infects lupins and causes lupinosis disease in livestock. Within the pathway, phomYc catalyzes the desaturation of the Ile moiety into 2,3-dehydroisoleucine (dIle). The pathway starts with the processing of the precursor phomA by several endopeptidases including kexin proteases as well as the cluster-specific S41 family peptidase phomP1 and the oligopeptidase phomG to produce 10 identical copies of the hexapeptide Tyr-Val-Ile-Pro-Ile-Asp. After being excised from the precursor peptide, the core peptides are cyclized and modified post-translationally by enzymes encoded within the gene cluster. The timing and order of proteolysis of the phomA precursor and PTMs are still unknown. Two tyrosinase-like enzymes, phomQ1 and phomQ2, catalyze the chlorination and hydroxylation of Tyr, respectively. PhomYb, is proposed to be involved in the construction of the macrocyclic structure. The other 4 ustYa family proteins may be involved in PTMs that generate the unique structure of phomopsin A. PhomYa is required for the hydroxylation of C-beta of Tyr. PhomYc, phomYd, and phomYe are responsible for the biosynthesis of 2,3-dehydroisoleucine (dIle), 2,3-dehydroaspartic acid (dAsp), and 3,4-dehydroproline (dPro), respectively. While dIle formation by phomYc is indispensable for the installation of dAsp by phomYd, the order of the other PTMs have not been elucidated yet. Most of the biosynthetic enzymes likely have broad substrate specificity, and thus, there might be a metabolic grid from a precursor to phomopsin A. The enzyme(s) responsible for the biosynthesis of 3,4-dehydrovaline (dVal) have also not been identified yet. Finally, phomM acts as an S-adenosylmethionine-dependent alpha-N-methyltransferase that catalyzes two successive N-methylation reactions, converting N-desmethyl-phomopsin A to phomopsin A and phomopsin A further to an N,N-dimethylated congener called phomopsin E. This chain is UstYa family oxidase phomYc, found in Diaporthe leptostromiformis (Lupinosis disease fungus).